The sequence spans 257 residues: Type III pantothenate kinase (257 aa).

Residue 6–13 participates in ATP binding; the sequence is DCGNTNTV. 107-110 lines the substrate pocket; the sequence is GPDR. Asp109 functions as the Proton acceptor in the catalytic mechanism. Position 129 (Asp129) interacts with K(+). Position 132 (Thr132) interacts with ATP. A substrate-binding site is contributed by Thr184.

It belongs to the type III pantothenate kinase family. Homodimer. NH4(+) is required as a cofactor. It depends on K(+) as a cofactor.

The protein resides in the cytoplasm. The catalysed reaction is (R)-pantothenate + ATP = (R)-4'-phosphopantothenate + ADP + H(+). The protein operates within cofactor biosynthesis; coenzyme A biosynthesis; CoA from (R)-pantothenate: step 1/5. Catalyzes the phosphorylation of pantothenate (Pan), the first step in CoA biosynthesis. The sequence is that of Type III pantothenate kinase from Roseobacter denitrificans (strain ATCC 33942 / OCh 114) (Erythrobacter sp. (strain OCh 114)).